The following is an 82-amino-acid chain: MNPIVSAASVVASGLSVGLAAIGPGIGQGTAAAQAVEGIARQPEAEGRIRGTLLLSLAFMESLTIYGLVVALALLFANPFTA.

A run of 2 helical transmembrane segments spans residues 7-27 and 57-77; these read AASV…PGIG and LAFM…LLFA.

Belongs to the ATPase C chain family. F-type ATPases have 2 components, F(1) - the catalytic core - and F(0) - the membrane proton channel. F(1) has five subunits: alpha(3), beta(3), gamma(1), delta(1), epsilon(1). F(0) has four main subunits: a(1), b(1), b'(1) and c(10-14). The alpha and beta chains form an alternating ring which encloses part of the gamma chain. F(1) is attached to F(0) by a central stalk formed by the gamma and epsilon chains, while a peripheral stalk is formed by the delta, b and b' chains.

The protein localises to the plastid. It localises to the chloroplast thylakoid membrane. In terms of biological role, f(1)F(0) ATP synthase produces ATP from ADP in the presence of a proton or sodium gradient. F-type ATPases consist of two structural domains, F(1) containing the extramembraneous catalytic core and F(0) containing the membrane proton channel, linked together by a central stalk and a peripheral stalk. During catalysis, ATP synthesis in the catalytic domain of F(1) is coupled via a rotary mechanism of the central stalk subunits to proton translocation. Its function is as follows. Key component of the F(0) channel; it plays a direct role in translocation across the membrane. A homomeric c-ring of between 10-14 subunits forms the central stalk rotor element with the F(1) delta and epsilon subunits. The chain is ATP synthase subunit c, chloroplastic from Rhodomonas salina (Cryptomonas salina).